Reading from the N-terminus, the 213-residue chain is Protein GET1 (213 aa).

Over 1 to 4 the chain is Lumenal; that stretch reads MPSL. Residues 5–24 form a helical membrane-spanning segment; that stretch reads LLVVFILQFLLHIINTVGAS. Residues 25-110 are Cytoplasmic-facing; sequence TVNDLLWILY…AFTSAVSTLR (86 aa). The stretch at 41–68 forms a coiled coil; sequence TSSSAQKAQKLKKEIVQLKRELGATSAQ. Residues 111 to 131 traverse the membrane as a helical segment; the sequence is WLGTQGLRFVLQFWFAKSPMF. Residues 132–155 are Lumenal-facing; the sequence is WMPAGWLPFYVEWILSFPRAPLGS. A helical transmembrane segment spans residues 156–172; that stretch reads VSINVWGIACASMIALA. The Cytoplasmic segment spans residues 173–213; it reads AEGLAAVWVLATKRPTPIATEKKEAMAFAADQKSSGEKKEL.

The protein belongs to the WRB/GET1 family. As to quaternary structure, interacts with GET3.

It localises to the endoplasmic reticulum membrane. Its function is as follows. Required for the post-translational delivery of tail-anchored (TA) proteins to the endoplasmic reticulum. Acts as a membrane receptor for soluble GET3, which recognizes and selectively binds the transmembrane domain of TA proteins in the cytosol. The polypeptide is Protein GET1 (Phaeosphaeria nodorum (strain SN15 / ATCC MYA-4574 / FGSC 10173) (Glume blotch fungus)).